The primary structure comprises 250 residues: Phosphoribosylaminoimidazole-succinocarboxamide synthase (250 aa).

Belongs to the SAICAR synthetase family.

The enzyme catalyses 5-amino-1-(5-phospho-D-ribosyl)imidazole-4-carboxylate + L-aspartate + ATP = (2S)-2-[5-amino-1-(5-phospho-beta-D-ribosyl)imidazole-4-carboxamido]succinate + ADP + phosphate + 2 H(+). It functions in the pathway purine metabolism; IMP biosynthesis via de novo pathway; 5-amino-1-(5-phospho-D-ribosyl)imidazole-4-carboxamide from 5-amino-1-(5-phospho-D-ribosyl)imidazole-4-carboxylate: step 1/2. This is Phosphoribosylaminoimidazole-succinocarboxamide synthase from Picosynechococcus sp. (strain ATCC 27264 / PCC 7002 / PR-6) (Agmenellum quadruplicatum).